Consider the following 388-residue polypeptide: 5-hydroxytryptamine receptor 4 (388 aa).

At 1–19 (MDKLDANVSSKEGFGSVEK) the chain is on the extracellular side. N7 carries N-linked (GlcNAc...) asparagine glycosylation. Residues 20–44 (VVLLTFLSAVILMAILGNLLVMVAV) traverse the membrane as a helical segment. Over 45–54 (CRDRQLRKIK) the chain is Cytoplasmic. Residues 55-78 (TNYFIVSLAFADLLVSVLVMPFGA) form a helical membrane-spanning segment. Residues 79-92 (IELVQDIWVYGEMF) are Extracellular-facing. A helical transmembrane segment spans residues 93 to 117 (CLVRTSLDVLLTTASIFHLCCISLD). C93 and C184 form a disulfide bridge. Residue D100 coordinates serotonin. Residues 118 to 133 (RYYAICCQPLVYRNKM) are Cytoplasmic-facing. A helical transmembrane segment spans residues 134–157 (TPLRIALMLGGCWVIPMFISFLPI). At 158-188 (MQGWNNIGIVDLIEKRKFNQNSNSTYCVFMV) the chain is on the extracellular side. A helical transmembrane segment spans residues 189 to 212 (NKPYAITCSVVAFYIPFLLMVLAY). Residues 213-257 (YRIYVTAKEHARQIQVLQRAGAPAEGRPQPADQHSTHRMRTETKA) lie on the Cytoplasmic side of the membrane. The chain crosses the membrane as a helical span at residues 258–283 (AKTLCIIMGCFCLCWAPFFVTNIVDP). Residue N279 participates in serotonin binding. At 284–290 (FIDYTVP) the chain is on the extracellular side. Residues 291–314 (GQLWTAFLWLGYINSGLNPFLYAF) traverse the membrane as a helical segment. The Cytoplasmic portion of the chain corresponds to 315–388 (LNKSFRRAFL…PLVAAQPIDT (74 aa)).

Belongs to the G-protein coupled receptor 1 family. In terms of assembly, interacts (via C-terminus 330-346 AA) with GRK5; this interaction is promoted by 5-HT (serotonin).

It is found in the cell membrane. The protein resides in the endosome membrane. In terms of biological role, G-protein coupled receptor for 5-hydroxytryptamine (serotonin), a biogenic hormone that functions as a neurotransmitter, a hormone and a mitogen. Ligand binding causes a conformation change that triggers signaling via guanine nucleotide-binding proteins (G proteins) and modulates the activity of downstream effectors. HTR4 is coupled to G(s) G alpha proteins and mediates activation of adenylate cyclase activity. This is 5-hydroxytryptamine receptor 4 (HTR4) from Cavia porcellus (Guinea pig).